The following is a 1398-amino-acid chain: Pyrolysin (1398 aa).

Residues 1 to 26 (MNKKGLTVLFIAIMLLSVVPVHFVSA) form the signal peptide. The propeptide occupies 27–149 (GTPPVSSENS…KTKEPSLEPK (123 aa)). Asn-152 is a glycosylation site (N-linked (GlcNAc...) asparagine). A Peptidase S8 domain is found at 154 to 656 (TWVINALQFI…HGLVNVTKSW (503 aa)). Catalysis depends on Asp-179, which acts as the Charge relay system. N-linked (GlcNAc...) asparagine glycosylation is found at Asn-222, Asn-228, Asn-240, Asn-257, Asn-262, Asn-298, and Asn-327. Residue His-365 is the Charge relay system of the active site. Residue Asn-406 is glycosylated (N-linked (GlcNAc...) asparagine). Ser-590 acts as the Charge relay system in catalysis. N-linked (GlcNAc...) asparagine glycosylation is found at Asn-651, Asn-663, Asn-739, Asn-792, Asn-893, Asn-908, Asn-917, Asn-929, Asn-1048, Asn-1056, Asn-1084, Asn-1117, Asn-1133, Asn-1140, Asn-1148, Asn-1208, Asn-1233, Asn-1237, and Asn-1332.

It belongs to the peptidase S8 family. In terms of processing, LWM pyrolysin seems to be produced by autoproteolytic activation of HMW pyrolysin. Glycosylated.

It is found in the cell envelope. Its function is as follows. Has endopeptidase activity toward caseins, casein fragments including alpha-S1-casein and synthetic peptides. The polypeptide is Pyrolysin (pls) (Pyrococcus furiosus (strain ATCC 43587 / DSM 3638 / JCM 8422 / Vc1)).